The chain runs to 366 residues: Tubulin-like protein CetZ (366 aa).

Residues Gln-10–Lys-14, Gly-103–Gly-105, Glu-136, Asn-163, and Asn-181 each bind GTP.

It belongs to the CetZ family.

The protein resides in the cytoplasm. Its function is as follows. Involved in cell shape control. The sequence is that of Tubulin-like protein CetZ from Pyrococcus furiosus (strain ATCC 43587 / DSM 3638 / JCM 8422 / Vc1).